A 666-amino-acid chain; its full sequence is Long-chain-fatty-acid--CoA ligase ACSBG2 (666 aa).

ATP contacts are provided by residues 230 to 238 (TSGTTGIPK), 418 to 423 (ELYGLS), D496, and R624.

It belongs to the ATP-dependent AMP-binding enzyme family. Bubblegum subfamily. In terms of tissue distribution, testis-specific.

It localises to the cytoplasm. The protein resides in the membrane. It carries out the reaction a long-chain fatty acid + ATP + CoA = a long-chain fatty acyl-CoA + AMP + diphosphate. It catalyses the reaction (5Z,8Z,11Z,14Z)-eicosatetraenoate + ATP + CoA = (5Z,8Z,11Z,14Z)-eicosatetraenoyl-CoA + AMP + diphosphate. The catalysed reaction is hexadecanoate + ATP + CoA = hexadecanoyl-CoA + AMP + diphosphate. The enzyme catalyses (9Z)-octadecenoate + ATP + CoA = (9Z)-octadecenoyl-CoA + AMP + diphosphate. It carries out the reaction (9Z,12Z)-octadecadienoate + ATP + CoA = (9Z,12Z)-octadecadienoyl-CoA + AMP + diphosphate. It catalyses the reaction tetracosanoate + ATP + CoA = tetracosanoyl-CoA + AMP + diphosphate. In terms of biological role, catalyzes the conversion of fatty acids such as long chain and very long-chain fatty acids to their active form acyl-CoAs for both synthesis of cellular lipids, and degradation via beta-oxidation. Can activate diverse saturated, monosaturated and polyunsaturated fatty acids. Has increased ability to activate oleic and linoleic acid. May play a role in spermatogenesis. The chain is Long-chain-fatty-acid--CoA ligase ACSBG2 from Homo sapiens (Human).